We begin with the raw amino-acid sequence, 396 residues long: Elongation factor Tu (396 aa).

Residues Lys10–Val206 enclose the tr-type G domain. The tract at residues Gly19–Thr26 is G1. Gly19–Thr26 serves as a coordination point for GTP. Thr26 lines the Mg(2+) pocket. The interval Gly62–Asn66 is G2. A G3 region spans residues Asp83–Gly86. Residues Asp83–His87 and Asn138–Asp141 contribute to the GTP site. The G4 stretch occupies residues Asn138–Asp141. The G5 stretch occupies residues Ser176–Leu178.

It belongs to the TRAFAC class translation factor GTPase superfamily. Classic translation factor GTPase family. EF-Tu/EF-1A subfamily. Monomer.

Its subcellular location is the cytoplasm. The catalysed reaction is GTP + H2O = GDP + phosphate + H(+). GTP hydrolase that promotes the GTP-dependent binding of aminoacyl-tRNA to the A-site of ribosomes during protein biosynthesis. The sequence is that of Elongation factor Tu from Kocuria rhizophila (strain ATCC 9341 / DSM 348 / NBRC 103217 / DC2201).